A 382-amino-acid polypeptide reads, in one-letter code: D-alanine--D-alanine ligase (382 aa).

The ATP-grasp domain maps to 139 to 348; sequence KRLMRDAGLP…PPALMDALIA (210 aa). An ATP-binding site is contributed by 168 to 223; the sequence is EALESRTLFVKPANMGSSVGVSRVADAGQFDQALAHAFAYDEKILIERAVPRAREI. Mg(2+)-binding residues include Asp300, Glu315, and Asn317.

It belongs to the D-alanine--D-alanine ligase family. The cofactor is Mg(2+). It depends on Mn(2+) as a cofactor.

Its subcellular location is the cytoplasm. It catalyses the reaction 2 D-alanine + ATP = D-alanyl-D-alanine + ADP + phosphate + H(+). It functions in the pathway cell wall biogenesis; peptidoglycan biosynthesis. In terms of biological role, cell wall formation. This is D-alanine--D-alanine ligase from Methylobacterium sp. (strain 4-46).